A 269-amino-acid chain; its full sequence is Glutamate racemase (269 aa).

Substrate-binding positions include 13–14 and 45–46; these read DS and YS. Cys-77 functions as the Proton donor/acceptor in the catalytic mechanism. 78 to 79 contacts substrate; it reads NT. Cys-188 functions as the Proton donor/acceptor in the catalytic mechanism. 189–190 lines the substrate pocket; sequence TH.

Belongs to the aspartate/glutamate racemases family.

It carries out the reaction L-glutamate = D-glutamate. The protein operates within cell wall biogenesis; peptidoglycan biosynthesis. Provides the (R)-glutamate required for cell wall biosynthesis. The polypeptide is Glutamate racemase (Pasteurella multocida (strain Pm70)).